A 147-amino-acid chain; its full sequence is Protein BUD31 homolog (147 aa).

Residues 8 to 12 carry the Nuclear localization signal motif; sequence RRVRK.

Belongs to the BUD31 (G10) family. In terms of assembly, identified in the spliceosome C complex.

The protein resides in the nucleus. Its function is as follows. Involved in pre-mRNA splicing process. In Caenorhabditis elegans, this protein is Protein BUD31 homolog.